We begin with the raw amino-acid sequence, 400 residues long: Nicotinate phosphoribosyltransferase (400 aa).

At histidine 220 the chain carries Phosphohistidine; by autocatalysis.

This sequence belongs to the NAPRTase family. Post-translationally, transiently phosphorylated on a His residue during the reaction cycle. Phosphorylation strongly increases the affinity for substrates and increases the rate of nicotinate D-ribonucleotide production. Dephosphorylation regenerates the low-affinity form of the enzyme, leading to product release.

The enzyme catalyses nicotinate + 5-phospho-alpha-D-ribose 1-diphosphate + ATP + H2O = nicotinate beta-D-ribonucleotide + ADP + phosphate + diphosphate. It participates in cofactor biosynthesis; NAD(+) biosynthesis; nicotinate D-ribonucleotide from nicotinate: step 1/1. Its function is as follows. Catalyzes the synthesis of beta-nicotinate D-ribonucleotide from nicotinate and 5-phospho-D-ribose 1-phosphate at the expense of ATP. The chain is Nicotinate phosphoribosyltransferase from Salmonella newport (strain SL254).